Here is a 274-residue protein sequence, read N- to C-terminus: NADPH-dependent 7-cyano-7-deazaguanine reductase (274 aa).

A disordered region spans residues 1–33 (MPKKDALDHLSLGQHTDYPNEYDPKQLQPVPRS). 84–86 (IES) contributes to the substrate binding site. NADPH is bound at residue 86 to 87 (SK). C183 (thioimide intermediate) is an active-site residue. The active-site Proton donor is D190. Residue 222 to 223 (HE) coordinates substrate. An NADPH-binding site is contributed by 250-251 (RG).

The protein belongs to the GTP cyclohydrolase I family. QueF type 2 subfamily. Homodimer.

It localises to the cytoplasm. It catalyses the reaction 7-aminomethyl-7-carbaguanine + 2 NADP(+) = 7-cyano-7-deazaguanine + 2 NADPH + 3 H(+). It participates in tRNA modification; tRNA-queuosine biosynthesis. Its function is as follows. Catalyzes the NADPH-dependent reduction of 7-cyano-7-deazaguanine (preQ0) to 7-aminomethyl-7-deazaguanine (preQ1). This chain is NADPH-dependent 7-cyano-7-deazaguanine reductase, found in Idiomarina loihiensis (strain ATCC BAA-735 / DSM 15497 / L2-TR).